A 1022-amino-acid chain; its full sequence is Integrator complex subunit 4 (1022 aa).

The 1D-myo-inositol hexakisphosphate site is built by Thr-148 and Lys-184. The disordered stretch occupies residues Lys-818–Asp-840.

This sequence belongs to the Integrator subunit 4 family. Belongs to the multiprotein complex Integrator, at least composed of IntS1, IntS2, IntS3, IntS4, omd/IntS5, IntS6, defl/IntS7, IntS8, IntS9, IntS10, IntS11, IntS12, asun/IntS13, IntS14 and IntS15. The core complex associates with protein phosphatase 2A subunits mts/PP2A and Pp2A-29B, to form the Integrator-PP2A (INTAC) complex. IntS4 is part of the RNA endonuclease subcomplex, composed of IntS4, IntS9, IntS11 and inositol hexakisphosphate (InsP6).

It is found in the nucleus. Functionally, component of the integrator complex, a multiprotein complex that terminates RNA polymerase II (Pol II) transcription in the promoter-proximal region of genes. The integrator complex provides a quality checkpoint during transcription elongation by driving premature transcription termination of transcripts that are unfavorably configured for transcriptional elongation: the complex terminates transcription by (1) catalyzing dephosphorylation of the C-terminal domain (CTD) of Pol II subunit Polr2A/Rbp1 and Spt5, and (2) degrading the exiting nascent RNA transcript via endonuclease activity. The integrator complex is also involved in the 3'-end processing of the U7 snRNA, and also the spliceosomal snRNAs U1, U2, U4 and U5. This is Integrator complex subunit 4 from Drosophila melanogaster (Fruit fly).